Reading from the N-terminus, the 393-residue chain is MAEVMDLGKDPNGPTHSSTLFVREDGSAMSFYVRPSSAKRRLSTLILHGGGILCRVQKPGAVLLAQPGEALAEASGDFISTQYILDCVERNEKLELEAYRLGLTEQASDPKPGASAEGSTEPEPQPLTGRIAYTDADDVAILTYVKENARSPSSVTGNALWKAMEKSSLTQHSWQSLKDRYLKHLQGQEHKYLLGNAPVSPSSQKLKRKAEQDPEAADSGEPQNKRTPDLPEEECVKGETKENGEADNKLFEEATPELGEAVVDESPDFEIHITMCDGDPPTPEEDSETQPDEEEEEPKVSTQEVGTAIKIIRQLMEKFNLDLSTVTQALLKNSGELEATSSFLESGRRPDGFPIWCRQDDLDLQKDDDDTRNALVKKYGAQNVARRIEFRKK.

Alanine 2 carries the post-translational modification N-acetylalanine. Positions 10–101 (DPNGPTHSST…EKLELEAYRL (92 aa)) constitute a BRCT domain. Serine 36 and serine 43 each carry phosphoserine. Residues 104-132 (TEQASDPKPGASAEGSTEPEPQPLTGRIA) are disordered. Residue lysine 111 forms a Glycyl lysine isopeptide (Lys-Gly) (interchain with G-Cter in SUMO2) linkage. The region spanning 125–185 (QPLTGRIAYT…SLKDRYLKHL (61 aa)) is the Myb-like domain. Phosphoserine is present on residues serine 151 and serine 153. Residue lysine 191 forms a Glycyl lysine isopeptide (Lys-Gly) (interchain with G-Cter in SUMO2) linkage. Disordered stretches follow at residues 194-248 (LGNA…EADN) and 272-305 (HITM…TQEV). Phosphoserine occurs at positions 200 and 203. Residues lysine 205, lysine 209, and lysine 237 each participate in a glycyl lysine isopeptide (Lys-Gly) (interchain with G-Cter in SUMO2) cross-link. Residues 223-248 (QNKRTPDLPEEECVKGETKENGEADN) show a composition bias toward basic and acidic residues. Positions 282 to 297 (TPEEDSETQPDEEEEE) are enriched in acidic residues. Residue lysine 366 forms a Glycyl lysine isopeptide (Lys-Gly) (interchain with G-Cter in SUMO2) linkage. The Nuclear localization signal signature appears at 377 to 393 (KKYGAQNVARRIEFRKK).

This sequence belongs to the RAP1 family. As to quaternary structure, associates with the I-kappa-B-kinase (IKK) core complex, composed of CHUK, IKBKB and IKBKG. Homodimer. Component of the shelterin complex (telosome) composed of TERF1, TERF2, TINF2, TERF2IP ACD and POT1. Interacts with TERF2 (but not TERF1) with its C-terminus. Interacts with SLX4/BTBD12. Interacts with TERF2; the interaction is direct.

It is found in the nucleus. The protein resides in the cytoplasm. The protein localises to the chromosome. Its subcellular location is the telomere. Its function is as follows. Acts both as a regulator of telomere function and as a transcription regulator. Involved in the regulation of telomere length and protection as a component of the shelterin complex (telosome). In contrast to other components of the shelterin complex, it is dispensible for telomere capping and does not participate in the protection of telomeres against non-homologous end-joining (NHEJ)-mediated repair. Instead, it is required to negatively regulate telomere recombination and is essential for repressing homology-directed repair (HDR), which can affect telomere length. Does not bind DNA directly: recruited to telomeric double-stranded 5'-TTAGGG-3' repeats via its interaction with TERF2. Independently of its function in telomeres, also acts as a transcription regulator: recruited to extratelomeric 5'-TTAGGG-3' sites via its association with TERF2 or other factors, and regulates gene expression. When cytoplasmic, associates with the I-kappa-B-kinase (IKK) complex and acts as a regulator of the NF-kappa-B signaling by promoting IKK-mediated phosphorylation of RELA/p65, leading to activate expression of NF-kappa-B target genes. This is Telomeric repeat-binding factor 2-interacting protein 1 (Terf2ip) from Rattus norvegicus (Rat).